The following is a 292-amino-acid chain: D-tagatose-1,6-bisphosphate aldolase subunit KbaY (292 aa).

D82 serves as the catalytic Proton donor. Zn(2+) is bound by residues H83 and H180. G181 is a binding site for dihydroxyacetone phosphate. Residue H208 participates in Zn(2+) binding. Residues 209-211 (GAS) and 230-233 (NVAT) contribute to the dihydroxyacetone phosphate site.

Belongs to the class II fructose-bisphosphate aldolase family. TagBP aldolase KbaY subfamily. As to quaternary structure, homotetramer. Forms a complex with KbaZ. Requires Zn(2+) as cofactor.

It carries out the reaction D-tagatofuranose 1,6-bisphosphate = D-glyceraldehyde 3-phosphate + dihydroxyacetone phosphate. It participates in carbohydrate metabolism; D-tagatose 6-phosphate degradation; D-glyceraldehyde 3-phosphate and glycerone phosphate from D-tagatose 6-phosphate: step 2/2. Functionally, catalytic subunit of the tagatose-1,6-bisphosphate aldolase KbaYZ, which catalyzes the reversible aldol condensation of dihydroxyacetone phosphate (DHAP or glycerone-phosphate) with glyceraldehyde 3-phosphate (G3P) to produce tagatose 1,6-bisphosphate (TBP). Requires KbaZ subunit for full activity and stability. The chain is D-tagatose-1,6-bisphosphate aldolase subunit KbaY from Enterobacter sp. (strain 638).